Reading from the N-terminus, the 270-residue chain is Formamidopyrimidine-DNA glycosylase (270 aa).

The Schiff-base intermediate with DNA role is filled by Pro-2. Glu-3 serves as the catalytic Proton donor. Lys-58 serves as the catalytic Proton donor; for beta-elimination activity. 3 residues coordinate DNA: His-90, Arg-109, and Arg-152. The segment at 237–270 adopts an FPG-type zinc-finger fold; it reads RVYGREGEPCQCGGVVKRIVQGGRSTFFCPRCQK. The Proton donor; for delta-elimination activity role is filled by Arg-260.

Belongs to the FPG family. Monomer. It depends on Zn(2+) as a cofactor.

It catalyses the reaction Hydrolysis of DNA containing ring-opened 7-methylguanine residues, releasing 2,6-diamino-4-hydroxy-5-(N-methyl)formamidopyrimidine.. It carries out the reaction 2'-deoxyribonucleotide-(2'-deoxyribose 5'-phosphate)-2'-deoxyribonucleotide-DNA = a 3'-end 2'-deoxyribonucleotide-(2,3-dehydro-2,3-deoxyribose 5'-phosphate)-DNA + a 5'-end 5'-phospho-2'-deoxyribonucleoside-DNA + H(+). Its function is as follows. Involved in base excision repair of DNA damaged by oxidation or by mutagenic agents. Acts as a DNA glycosylase that recognizes and removes damaged bases. Has a preference for oxidized purines, such as 7,8-dihydro-8-oxoguanine (8-oxoG). Has AP (apurinic/apyrimidinic) lyase activity and introduces nicks in the DNA strand. Cleaves the DNA backbone by beta-delta elimination to generate a single-strand break at the site of the removed base with both 3'- and 5'-phosphates. The sequence is that of Formamidopyrimidine-DNA glycosylase from Novosphingobium aromaticivorans (strain ATCC 700278 / DSM 12444 / CCUG 56034 / CIP 105152 / NBRC 16084 / F199).